A 505-amino-acid chain; its full sequence is Cytochrome P450 monooxygenase FGM1 (505 aa).

A signal peptide spans 1–23 (MPLILSITSSGTVLVLLTLLSLA). Asn-188 and Asn-351 each carry an N-linked (GlcNAc...) asparagine glycan. Cys-450 provides a ligand contact to heme.

It belongs to the cytochrome P450 family. Requires heme as cofactor.

It participates in secondary metabolite biosynthesis. Cytochrome P450 monooxygenase; part of the Fg3_54/C64 gene cluster that mediates the biosynthesis of the octapeptide fusaoctaxin A, a virulence factor that is required for cell-to-cell invasiveness of plant host. The 2 nonribosomal peptide synthetases NRPS9 and NRPS5 form an assembly line which likely utilizes GABA as a starter unit (loaded on the unique module M1 of NRPS9) and sequentially incorporates seven extender units composed of the residues L-Ala, L-allo-Ile, L-Ser, L-Val, L-Ser, L-Leu and L-Leu, respectively. During the process, each of the residues that are tethered on modules M3-M7 of NRPS5 containing an E domain can undergo an epimerization reaction to produce a D-configuration before the transpeptidation reaction occurs. The elongation of the peptidyl chain might be terminated by module M8-mediated L-Leu incorporation, followed by R domain-catalyzed 4 electron reduction to release the resulting octapeptide from the assembly line as an alcohol. Fusaoctaxin A is cleaved by the cluster specific ABC transporter FGM5 to the pentapeptide fusapentaxin A and the tripeptide fusatrixin A. The other enzymes from the cluster, FGM1, FGM2, FGM3 and FGM9 seem not to be involved in the biosynthesis of fusaoctaxin A and their functions have still to be determined. This Gibberella zeae (strain ATCC MYA-4620 / CBS 123657 / FGSC 9075 / NRRL 31084 / PH-1) (Wheat head blight fungus) protein is Cytochrome P450 monooxygenase FGM1.